The following is a 132-amino-acid chain: Small ribosomal subunit protein uS8 (132 aa).

This sequence belongs to the universal ribosomal protein uS8 family. Part of the 30S ribosomal subunit. Contacts proteins S5 and S12.

In terms of biological role, one of the primary rRNA binding proteins, it binds directly to 16S rRNA central domain where it helps coordinate assembly of the platform of the 30S subunit. The sequence is that of Small ribosomal subunit protein uS8 from Mycobacterium marinum (strain ATCC BAA-535 / M).